The primary structure comprises 198 residues: Small ribosomal subunit protein eS1 (198 aa).

It belongs to the eukaryotic ribosomal protein eS1 family.

This is Small ribosomal subunit protein eS1 from Methanosphaerula palustris (strain ATCC BAA-1556 / DSM 19958 / E1-9c).